Reading from the N-terminus, the 502-residue chain is Protein Dok-7 (502 aa).

A PH domain is found at 4 to 109 (SVVVEGYARL…WDARLRYSLG (106 aa)). Residues 105–210 (RYSLGEVHRF…RGISPTRGPF (106 aa)) form the IRS-type PTB domain. Disordered stretches follow at residues 210–232 (FGLR…RLNH), 249–279 (STAS…SDCS), 291–358 (TSIQ…GSFS), and 418–482 (EVGG…GHPG). 2 stretches are compositionally biased toward low complexity: residues 264 to 279 (ISGS…SDCS) and 301 to 316 (AGAK…PLPS). Polar residues predominate over residues 336–346 (GRQSSSDSGIA). Residues 347-358 (TGSHSSYSGSFS) are compositionally biased toward low complexity. Positions 459 to 473 (PNEHFRSPSESKKSS) are enriched in basic and acidic residues.

It is found in the cell membrane. It localises to the synapse. In terms of biological role, probable muscle-intrinsic activator of MUSK that plays an essential role in neuromuscular synaptogenesis. Acts in aneural activation of MUSK and subsequent acetylcholine receptor (AchR) clustering in myotubes. The polypeptide is Protein Dok-7 (dok7) (Takifugu rubripes (Japanese pufferfish)).